Consider the following 449-residue polypeptide: tRNA modification GTPase MnmE (449 aa).

Residues Arg-24, Glu-81, and Lys-121 each coordinate (6S)-5-formyl-5,6,7,8-tetrahydrofolate. Residues 218 to 375 (GLVVAITGPP…LIAALGKFAA (158 aa)) enclose the TrmE-type G domain. GTP contacts are provided by residues 228–233 (NVGKST), 247–253 (SPHAGTT), and 272–275 (DTAG). Residues Ser-232 and Thr-253 each coordinate Mg(2+). Lys-449 provides a ligand contact to (6S)-5-formyl-5,6,7,8-tetrahydrofolate.

It belongs to the TRAFAC class TrmE-Era-EngA-EngB-Septin-like GTPase superfamily. TrmE GTPase family. Homodimer. Heterotetramer of two MnmE and two MnmG subunits. K(+) is required as a cofactor.

Its subcellular location is the cytoplasm. Exhibits a very high intrinsic GTPase hydrolysis rate. Involved in the addition of a carboxymethylaminomethyl (cmnm) group at the wobble position (U34) of certain tRNAs, forming tRNA-cmnm(5)s(2)U34. This Rhodopseudomonas palustris (strain BisB18) protein is tRNA modification GTPase MnmE.